Reading from the N-terminus, the 471-residue chain is Sulfate adenylyltransferase subunit 1 (471 aa).

The tr-type G domain maps to 22 to 237; the sequence is KELLRFLTCG…LESVQITGAK (216 aa). A G1 region spans residues 31-38; the sequence is GSVDDGKS. GTP is bound at residue 31 to 38; sequence GSVDDGKS. The interval 89 to 93 is G2; the sequence is GITID. The segment at 110–113 is G3; the sequence is DTPG. GTP is bound by residues 110 to 114 and 165 to 168; these read DTPGH and NKMD. Residues 165-168 form a G4 region; the sequence is NKMD. The tract at residues 202–204 is G5; it reads SAL.

This sequence belongs to the TRAFAC class translation factor GTPase superfamily. Classic translation factor GTPase family. CysN/NodQ subfamily. In terms of assembly, heterodimer composed of CysD, the smaller subunit, and CysN.

The catalysed reaction is sulfate + ATP + H(+) = adenosine 5'-phosphosulfate + diphosphate. The protein operates within sulfur metabolism; hydrogen sulfide biosynthesis; sulfite from sulfate: step 1/3. Functionally, with CysD forms the ATP sulfurylase (ATPS) that catalyzes the adenylation of sulfate producing adenosine 5'-phosphosulfate (APS) and diphosphate, the first enzymatic step in sulfur assimilation pathway. APS synthesis involves the formation of a high-energy phosphoric-sulfuric acid anhydride bond driven by GTP hydrolysis by CysN coupled to ATP hydrolysis by CysD. This Saccharophagus degradans (strain 2-40 / ATCC 43961 / DSM 17024) protein is Sulfate adenylyltransferase subunit 1.